A 585-amino-acid chain; its full sequence is Serine/threonine-protein kinase Nek3 (585 aa).

The region spanning 4 to 258 (YEVLEQIGKG…AAELLKHPHL (255 aa)) is the Protein kinase domain. ATP-binding positions include 10 to 18 (IGKGSFGSA) and Lys33. Asp129 acts as the Proton acceptor in catalysis. Disordered stretches follow at residues 354–413 (GNHS…TPVN) and 489–511 (DSSKNHTGDSSDPSILGTDSNPL). Polar residues-rich tracts occupy residues 400 to 413 (RASQPTRRASTPVN) and 498 to 511 (SSDPSILGTDSNPL).

Belongs to the protein kinase superfamily. NEK Ser/Thr protein kinase family. NIMA subfamily. In terms of assembly, interacts with PLIM2B. In terms of tissue distribution, expressed in pollen grains.

The catalysed reaction is L-seryl-[protein] + ATP = O-phospho-L-seryl-[protein] + ADP + H(+). It carries out the reaction L-threonyl-[protein] + ATP = O-phospho-L-threonyl-[protein] + ADP + H(+). May be involved in plant development processes. May function downstream of DCW11 in retrograde signaling from the mitochondria to the nucleus. Seems to be involved in the mechanism of cytoplasmic male sterility (CMS) occurrence. The chain is Serine/threonine-protein kinase Nek3 from Oryza sativa subsp. japonica (Rice).